The following is a 104-amino-acid chain: uncharacterized protein (104 aa).

Disordered stretches follow at residues 1 to 20 (MTET…TTRK) and 83 to 104 (TASA…VAKK). Residues 83-93 (TASASSSGKKV) show a composition bias toward low complexity. A compositionally biased stretch (basic residues) spans 94-104 (VASKKKVVAKK).

This is an uncharacterized protein from Dictyostelium discoideum (Social amoeba).